A 901-amino-acid chain; its full sequence is Nuclear factor of activated T-cells, cytoplasmic 4 (901 aa).

2 disordered regions span residues 15 to 179 and 203 to 362; these read LVFG…LSSW and NEAA…EDSV. Residues 61-81 are compositionally biased toward pro residues; it reads IPRPPPPRPGMHSPPPRPAPS. Residues 96 to 109 are compositionally biased toward gly residues; that stretch reads GGPGGNAGGAGGGR. A calcineurin-binding region spans residues 114-119; that stretch reads PSIRIT. Low complexity predominate over residues 114-123; it reads PSIRITSISP. Residues 151-165 show a composition bias toward gly residues; it reads GFGGYREAGGQGGGA. Low complexity predominate over residues 166-179; that stretch reads FFSPSPGSSSLSSW. Phosphoserine; by MAPK7 and MAPK14 occurs at positions 168 and 170. Residues Ser-213 and Ser-217 each carry the phosphoserine; by MAPK8 and MAPK9 modification. One copy of the SP 1 repeat lies at 213–229; sequence SPLPSPRASPRPWTPED. Residues 213-293 form a 2 approximate SP repeats region; sequence SPLPSPRASP…LSRRGSLGEE (81 aa). Composition is skewed to pro residues over residues 215-227 and 254-263; these read LPSPRASPRPWTP and GPVPASPRPA. Positions 268 to 270 match the Nuclear localization signal motif; sequence KRR. The segment covering 272-288 has biased composition (low complexity); the sequence is SSSGTPSSASPALSRRG. The stretch at 277–293 is one SP 2; approximate repeat; that stretch reads PSSASPALSRRGSLGEE. A Phosphoserine modification is found at Ser-289. Ser-334 carries the phosphoserine; by RPS6KA3 modification. Ser-344 carries the phosphoserine modification. The RHD domain maps to 401-582; that stretch reads SALPPLDWPL…VPIECSQRSA (182 aa). The DNA-binding element occupies 430–437; sequence RAHYETEG. In terms of domain architecture, IPT/TIG spans 586–683; it reads PQVETYSPSA…KRSPTQSFKF (98 aa). The Nuclear localization signal motif lies at 672–674; sequence RRK. A Glycyl lysine isopeptide (Lys-Gly) (interchain with G-Cter in SUMO2) cross-link involves residue Lys-689. Disordered stretches follow at residues 695–721 and 827–869; these read DSSLRGFPSTSGPPFGPDVDFSPPRPP and PQSA…FRDS.

As to quaternary structure, member of the multicomponent NFATC transcription complex that consists of at least two components, a pre-existing cytoplasmic component NFATC2 and an inducible nuclear component NFATC1. Other NFAT proteins, such as NFATC3, or members of the activating protein-1 (AP-1) family and MAF can also bind the complex. NFAT proteins can bind DNA as monomers or dimers. Component of a promoter-binding complex composed of STAT3, NFATC3 and NFATC4; complex formation is enhanced by calcineurin. Interacts with CREBBP; this interaction potentiates transcription activation. Interacts with MAPK8/JNK1 and MAPK9/JNK2. Interacts with GATA4 (via the second Zn finger). Interacts (via N-terminus) with IRAK1 (via C-terminus). Interacts with RPS6KA3. Interacts with HOMER1, HOMER2 and HOMER3; this interaction competes with calcineurin/PPP3CA-binding and hence prevents NFATC4 dephosphorylation and activation. Interacts with ESR1 and ESR2; this interaction decreases NFATC4 transcriptional activity. Interacts with MTOR and MAPK7/ERK5. Interacts with TRIM17; this interaction prevents NFATC3 nuclear localization. Interacts with TCF25 (via C-terminus); the interaction leads to suppression of NFATC4 transcription factor activity and is reduced following stimulation with angiotensin-2. In terms of processing, phosphorylated by NFATC-kinases; dephosphorylated by calcineurin/PPP3CA. Phosphorylated on Ser-168 and Ser-170 by MTOR, IRAK1, MAPK7/ERK5 and MAPK14/p38, on Ser-213 and Ser-217 by MAPK8 and MAPK9, and on Ser-289 and Ser-344 by RPS6KA3. Phosphorylated by GSK3B. Phosphorylation by GSK3B markedly increases NFATC4 ubiquitination. Phosphorylation by MAPK8/JNK1, MAPK9/JNK2 and RPS6KA3 may stimulate NFATC4 transcriptional activity. Phosphorylation at Ser-168 and Ser-170 is stimulated by UV irradiation. Ubiquitinated, leading to degradation by the proteasome. Ubiquitination may be stimulated by GSK3B-dependent phosphorylation. Polyubiquitin linkage mainly occurs through 'Lys-48'. Widely expressed. In the brain, expressed in neurons. Expressed in the hippocampus (at protein level). In the hippocampus, expressed in both the CA1-CA3 pyramidal cells and the dentate gyrus granular cells. Expressed in a subset of hippocampal cells representing adult-born neurons (at protein level). Expressed in the submandibular gland (at protein level). In the olfactory system, expressed at low levels in the glomerular and granular layers and in the mitral cell layer. In the cerebellum, expressed at moderate levels in granular neurons. Expressed at moderate levels in the choroid plexus and ependymal cells. Expressed in neurons of the cochlear nucleus (at protein level). Expressed at low levels in the heart (at protein level). Expressed in ventricular cardiomyocytes (at protein level). Expressed in the lung.

Its subcellular location is the cytoplasm. The protein resides in the nucleus. Ca(2+)-regulated transcription factor that is involved in several processes, including the development and function of the immune, cardiovascular, musculoskeletal, and nervous systems. Involved in T-cell activation, stimulating the transcription of cytokine genes, including that of IL2 and IL4. Following JAK/STAT signaling activation and as part of a complex with NFATC3 and STAT3, binds to the alpha-beta E4 promoter region of CRYAB and activates transcription in cardiomyocytes. Along with NFATC3, involved in embryonic heart development. Involved in mitochondrial energy metabolism required for cardiac morphogenesis and function. Transactivates many genes involved in heart physiology. Along with GATA4, binds to and activates NPPB/BNP promoter. Activates NPPA/ANP/ANF and MYH7/beta-MHC transcription. Binds to and transactivates AGTR2 gene promoter. Involved in the regulation of adult hippocampal neurogenesis. Involved in BDNF-driven pro-survival signaling in hippocampal adult-born neurons. Involved in the formation of long-term spatial memory and long-term potentiation. In cochlear nucleus neurons, may play a role in deafferentation-induced apoptosis during a developmental critical period when auditory neurons depend on afferent input for survival. Binds to and activates the BACE1/Beta-secretase 1 promoter, hence may regulate the proteolytic processing of the amyloid precursor protein (APP). Plays a role in adipocyte differentiation. May be involved in myoblast differentiation into myotubes. Binds the consensus DNA sequence 5'-GGAAAAT-3'. In the presence of CREBBP, activates TNF transcription. Binds to PPARG gene promoter and regulates its activity. Binds to PPARG and REG3G gene promoters. The protein is Nuclear factor of activated T-cells, cytoplasmic 4 of Mus musculus (Mouse).